Consider the following 157-residue polypeptide: Protein Smg homolog (157 aa).

Belongs to the Smg family.

The chain is Protein Smg homolog from Shewanella woodyi (strain ATCC 51908 / MS32).